Here is a 510-residue protein sequence, read N- to C-terminus: ATP synthase subunit alpha (510 aa).

169-176 provides a ligand contact to ATP; that stretch reads GDRQTGKT.

It belongs to the ATPase alpha/beta chains family. F-type ATPases have 2 components, CF(1) - the catalytic core - and CF(0) - the membrane proton channel. CF(1) has five subunits: alpha(3), beta(3), gamma(1), delta(1), epsilon(1). CF(0) has four main subunits: a(1), b(1), b'(1) and c(9-12).

The protein resides in the cell inner membrane. It catalyses the reaction ATP + H2O + 4 H(+)(in) = ADP + phosphate + 5 H(+)(out). In terms of biological role, produces ATP from ADP in the presence of a proton gradient across the membrane. The alpha chain is a regulatory subunit. In Rhodopseudomonas palustris (strain BisB18), this protein is ATP synthase subunit alpha.